A 374-amino-acid polypeptide reads, in one-letter code: Cyclin-D (374 aa).

Belongs to the cyclin family. Cyclin D subfamily.

The protein is Cyclin-D (CycD) of Ostreococcus tauri.